Consider the following 590-residue polypeptide: UvrABC system protein C (590 aa).

The 78-residue stretch at 14-91 (DQPGCYLMKD…IKKYDPKYNV (78 aa)) folds into the GIY-YIG domain. A UVR domain is found at 196–231 (QQIKKELTEKMQEAAEQLEFERAKELRDQIAYIDST).

This sequence belongs to the UvrC family. In terms of assembly, interacts with UvrB in an incision complex.

It is found in the cytoplasm. Functionally, the UvrABC repair system catalyzes the recognition and processing of DNA lesions. UvrC both incises the 5' and 3' sides of the lesion. The N-terminal half is responsible for the 3' incision and the C-terminal half is responsible for the 5' incision. In Bacillus pumilus (strain SAFR-032), this protein is UvrABC system protein C.